Consider the following 101-residue polypeptide: Large ribosomal subunit protein P1 (101 aa).

Residues 61–72 are compositionally biased toward low complexity; sequence AAPAAAAAPAAA. A disordered region spans residues 61–101; the sequence is AAPAAAAAPAAAEEAEEEAEEEEEEEEAEEEAAAGLGALFG. Residues 73 to 92 show a composition bias toward acidic residues; it reads EEAEEEAEEEEEEEEAEEEA.

This sequence belongs to the eukaryotic ribosomal protein P1/P2 family. Part of the 50S ribosomal subunit. Homodimer, it forms part of the ribosomal stalk which helps the ribosome interact with GTP-bound translation factors. Forms a heptameric uL10/P0(P1)2(P1)2(P1)2 complex, where uL10/P0 forms an elongated spine to which the P1 dimers bind in a sequential fashion.

In terms of biological role, forms part of the ribosomal stalk, playing a central role in the interaction of the ribosome with GTP-bound translation factors. The polypeptide is Large ribosomal subunit protein P1 (Methanothermobacter thermautotrophicus (strain ATCC 29096 / DSM 1053 / JCM 10044 / NBRC 100330 / Delta H) (Methanobacterium thermoautotrophicum)).